Consider the following 122-residue polypeptide: Large ribosomal subunit protein uL14 (122 aa).

The protein belongs to the universal ribosomal protein uL14 family. As to quaternary structure, part of the 50S ribosomal subunit. Forms a cluster with proteins L3 and L19. In the 70S ribosome, L14 and L19 interact and together make contacts with the 16S rRNA in bridges B5 and B8.

In terms of biological role, binds to 23S rRNA. Forms part of two intersubunit bridges in the 70S ribosome. This is Large ribosomal subunit protein uL14 from Clostridioides difficile (strain 630) (Peptoclostridium difficile).